The chain runs to 137 residues: MGAHLTRRYLWDASVEPDPEKIPSFPPDLGFPERKERVMVATQQEMMDAQLTLQQRDYCAHYLIRLLKCKRDSFPNFLACKHEQHDWDYCEHLDYVKRMKEFERERRLLQRKKRRALKEARVAQGQGEGEVGPEVAL.

The N-myristoyl glycine moiety is linked to residue glycine 2. In terms of domain architecture, CHCH spans 56–98 (RDYCAHYLIRLLKCKRDSFPNFLACKHEQHDWDYCEHLDYVKR). Positions 59 to 69 (CAHYLIRLLKC) match the Cx9C motif 1 motif. 2 disulfide bridges follow: cysteine 59-cysteine 90 and cysteine 69-cysteine 80. Serine 73 is subject to Phosphoserine. Residues 80–90 (CKHEQHDWDYC) carry the Cx9C motif 2 motif.

Belongs to the complex I NDUFB7 subunit family. In terms of assembly, complex I is composed of 45 different subunits.

It localises to the mitochondrion inner membrane. The protein resides in the mitochondrion intermembrane space. In terms of biological role, accessory subunit of the mitochondrial membrane respiratory chain NADH dehydrogenase (Complex I), that is believed not to be involved in catalysis. Complex I functions in the transfer of electrons from NADH to the respiratory chain. The immediate electron acceptor for the enzyme is believed to be ubiquinone. The protein is NADH dehydrogenase [ubiquinone] 1 beta subcomplex subunit 7 (Ndufb7) of Mus musculus (Mouse).